A 250-amino-acid polypeptide reads, in one-letter code: uncharacterized protein (250 aa).

The next 7 helical transmembrane spans lie at 36–56, 73–93, 101–121, 128–148, 156–176, 180–200, and 225–245; these read VALGLVVSGALAYATSSVPAV, PLYMVVAFAPLVLMLIAGFAM, AGALYWTIVSLIGASLGSVML, VAATFFVTATAFGGLSLFGYT, FGSFLMMGVIGLIVASIVSIF, PALLFAINVLGVLIFSGLIAY, and FGALSLYINFINLFQFLLSFF.

It belongs to the BI1 family.

It is found in the cell membrane. This is an uncharacterized protein from Caulobacter vibrioides (strain ATCC 19089 / CIP 103742 / CB 15) (Caulobacter crescentus).